Reading from the N-terminus, the 408-residue chain is Putative gustatory receptor 58b (408 aa).

Residues 1–44 (MLHPKLGRVMNVVYYHSVVFALMSTTLRIRSCRKCLRLEKVSRT) are Cytoplasmic-facing. The chain crosses the membrane as a helical span at residues 45–65 (YTIYSFFVGIFLFLNLYFMVP). Over 66-82 (RIMEDGYMKYNIVLQWN) the chain is Extracellular. Residues 83–103 (FFVMLFLRAIAVVSCYGTLWL) form a helical membrane-spanning segment. Topologically, residues 104-150 (KRHKIIQLYKYSLIYWKRFGHITRAIVDKKELLDLQESLARIMIRKI) are cytoplasmic. Residues 151–171 (ILLYSAFLCSTVLQYQLLSVI) traverse the membrane as a helical segment. Topologically, residues 172 to 193 (NPQIFLAFCARLTHFLHFLCVK) are extracellular. Residues 194–214 (MGFFGVLVLLNHQFLVIHLAI) traverse the membrane as a helical segment. Residues 215 to 245 (NALHGRKARKKWKALRSVAAMHLKTLRLARR) are Cytoplasmic-facing. Residues 246–266 (IFDMFDIANATVFINMFMTAI) traverse the membrane as a helical segment. Residues 267-284 (NILYHAVQYSNSSIKSNG) are Extracellular-facing. A glycan (N-linked (GlcNAc...) asparagine) is linked at Asn-277. Residues 285–305 (WGILFGNGLIVFNFWGTMALM) form a helical membrane-spanning segment. At 306–364 (EMLDSVVTSCNNTGQQLRQLSDLPKVGPKMQRELDVFTMQLRQNRLVYKICGIVELDKP) the chain is on the cytoplasmic side. A helical membrane pass occupies residues 365–385 (ACLSYIGSILSNVIILMQFDL). At 386–408 (RRQRQPINDRQYLIHLMKNKTKV) the chain is on the extracellular side. Asn-404 carries an N-linked (GlcNAc...) asparagine glycan.

This sequence belongs to the insect chemoreceptor superfamily. Gustatory receptor (GR) family. Gr22e subfamily. In terms of tissue distribution, expressed in the adult labellar chemosensory neurons, labral sense organ and thorax. In larvae, is in neurons of the terminal external chemosensory organ as well as in the dorsal pharyngeal sense organ.

Its subcellular location is the cell membrane. Functionally, probable gustatory receptor which mediates acceptance or avoidance behavior, depending on its substrates. This chain is Putative gustatory receptor 58b (Gr58b), found in Drosophila melanogaster (Fruit fly).